A 213-amino-acid polypeptide reads, in one-letter code: 3-demethoxyubiquinol 3-hydroxylase (213 aa).

6 residues coordinate Fe cation: glutamate 62, glutamate 92, histidine 95, glutamate 144, glutamate 176, and histidine 179.

It belongs to the COQ7 family. Fe cation is required as a cofactor.

The protein localises to the cell membrane. The enzyme catalyses a 5-methoxy-2-methyl-3-(all-trans-polyprenyl)benzene-1,4-diol + AH2 + O2 = a 3-demethylubiquinol + A + H2O. The protein operates within cofactor biosynthesis; ubiquinone biosynthesis. Catalyzes the hydroxylation of 2-nonaprenyl-3-methyl-6-methoxy-1,4-benzoquinol during ubiquinone biosynthesis. In Chromohalobacter salexigens (strain ATCC BAA-138 / DSM 3043 / CIP 106854 / NCIMB 13768 / 1H11), this protein is 3-demethoxyubiquinol 3-hydroxylase.